Consider the following 401-residue polypeptide: S-adenosylmethionine synthase (401 aa).

His-15 lines the ATP pocket. Asp-17 is a Mg(2+) binding site. Glu-43 lines the K(+) pocket. Positions 56 and 99 each coordinate L-methionine. Residues 99 to 109 form a flexible loop region; the sequence is QSPEIGAGVDT. Residues 101 to 132 are disordered; the sequence is PEIGAGVDTSHEVRGSSSTDEDDRQGAGDQGL. Residues 174–176, Asp-254, 260–261, Ala-277, and Lys-281 each bind ATP; these read DGK and RK. Asp-254 is an L-methionine binding site. An L-methionine-binding site is contributed by Lys-285.

The protein belongs to the AdoMet synthase family. As to quaternary structure, homotetramer; dimer of dimers. Requires Mg(2+) as cofactor. K(+) serves as cofactor.

It localises to the cytoplasm. The enzyme catalyses L-methionine + ATP + H2O = S-adenosyl-L-methionine + phosphate + diphosphate. The protein operates within amino-acid biosynthesis; S-adenosyl-L-methionine biosynthesis; S-adenosyl-L-methionine from L-methionine: step 1/1. In terms of biological role, catalyzes the formation of S-adenosylmethionine (AdoMet) from methionine and ATP. The overall synthetic reaction is composed of two sequential steps, AdoMet formation and the subsequent tripolyphosphate hydrolysis which occurs prior to release of AdoMet from the enzyme. The polypeptide is S-adenosylmethionine synthase (Corynebacterium urealyticum (strain ATCC 43042 / DSM 7109)).